The following is a 209-amino-acid chain: Octanoyltransferase (209 aa).

The BPL/LPL catalytic domain occupies 30 to 209; it reads DHKPEIIYLV…IQTEFNKIFK (180 aa). Residues 69–76, 143–145, and 156–158 each bind substrate; these read RGGKFTFH, AIG, and GVA. The active-site Acyl-thioester intermediate is Cys-174.

It belongs to the LipB family.

Its subcellular location is the cytoplasm. The catalysed reaction is octanoyl-[ACP] + L-lysyl-[protein] = N(6)-octanoyl-L-lysyl-[protein] + holo-[ACP] + H(+). The protein operates within protein modification; protein lipoylation via endogenous pathway; protein N(6)-(lipoyl)lysine from octanoyl-[acyl-carrier-protein]: step 1/2. Its function is as follows. Catalyzes the transfer of endogenously produced octanoic acid from octanoyl-acyl-carrier-protein onto the lipoyl domains of lipoate-dependent enzymes. Lipoyl-ACP can also act as a substrate although octanoyl-ACP is likely to be the physiological substrate. The protein is Octanoyltransferase of Rickettsia conorii (strain ATCC VR-613 / Malish 7).